The chain runs to 699 residues: Elongation factor G (699 aa).

The tr-type G domain maps to 8–283 (EHIRNIGICA…AVVDFLPSPI (276 aa)). GTP is bound by residues 17 to 24 (AHIDAGKT), 81 to 85 (DTPGH), and 135 to 138 (NKMD).

This sequence belongs to the TRAFAC class translation factor GTPase superfamily. Classic translation factor GTPase family. EF-G/EF-2 subfamily.

The protein localises to the cytoplasm. In terms of biological role, catalyzes the GTP-dependent ribosomal translocation step during translation elongation. During this step, the ribosome changes from the pre-translocational (PRE) to the post-translocational (POST) state as the newly formed A-site-bound peptidyl-tRNA and P-site-bound deacylated tRNA move to the P and E sites, respectively. Catalyzes the coordinated movement of the two tRNA molecules, the mRNA and conformational changes in the ribosome. The sequence is that of Elongation factor G from Rickettsia helvetica.